The sequence spans 355 residues: Tryptophan--tRNA ligase (355 aa).

ATP contacts are provided by residues 13 to 15 (QPT) and 21 to 22 (GN). The 'HIGH' region motif lies at 14 to 22 (PTGNLHLGN). Position 137 (Asp-137) interacts with L-tryptophan. Residues 149–151 (GED), Ile-208, and 217–221 (KMSKS) contribute to the ATP site. Positions 217–221 (KMSKS) match the 'KMSKS' region motif.

The protein belongs to the class-I aminoacyl-tRNA synthetase family. As to quaternary structure, homodimer.

It localises to the cytoplasm. It carries out the reaction tRNA(Trp) + L-tryptophan + ATP = L-tryptophyl-tRNA(Trp) + AMP + diphosphate + H(+). In terms of biological role, catalyzes the attachment of tryptophan to tRNA(Trp). This chain is Tryptophan--tRNA ligase, found in Mesorhizobium japonicum (strain LMG 29417 / CECT 9101 / MAFF 303099) (Mesorhizobium loti (strain MAFF 303099)).